A 327-amino-acid chain; its full sequence is Phenylalanine--tRNA ligase alpha subunit (327 aa).

Glu252 lines the Mg(2+) pocket.

This sequence belongs to the class-II aminoacyl-tRNA synthetase family. Phe-tRNA synthetase alpha subunit type 1 subfamily. In terms of assembly, tetramer of two alpha and two beta subunits. Mg(2+) is required as a cofactor.

Its subcellular location is the cytoplasm. It catalyses the reaction tRNA(Phe) + L-phenylalanine + ATP = L-phenylalanyl-tRNA(Phe) + AMP + diphosphate + H(+). This chain is Phenylalanine--tRNA ligase alpha subunit, found in Shewanella frigidimarina (strain NCIMB 400).